The chain runs to 284 residues: Nucleoid occlusion protein (284 aa).

Positions 143 to 162 (EALAQRVGKSQSAIANKMRL) form a DNA-binding region, H-T-H motif.

Belongs to the ParB family.

It localises to the cytoplasm. The protein localises to the nucleoid. Effects nucleoid occlusion by binding relatively nonspecifically to DNA and preventing the assembly of the division machinery in the vicinity of the nucleoid, especially under conditions that disturb the cell cycle. It helps to coordinate cell division and chromosome segregation by preventing the formation of the Z ring through the nucleoid, which would cause chromosome breakage. The protein is Nucleoid occlusion protein of Listeria innocua serovar 6a (strain ATCC BAA-680 / CLIP 11262).